Consider the following 414-residue polypeptide: 5-aminolevulinate synthase (414 aa).

Substrate is bound by residues R22, S133, and K152. The pyridoxal 5'-phosphate site is built by S185, H213, and T241. The active site involves K244. Position 244 is an N6-(pyridoxal phosphate)lysine (K244). Pyridoxal 5'-phosphate is bound by residues T273 and T274. A substrate-binding site is contributed by T359.

The protein belongs to the class-II pyridoxal-phosphate-dependent aminotransferase family. Homodimer. It depends on pyridoxal 5'-phosphate as a cofactor.

The catalysed reaction is succinyl-CoA + glycine + H(+) = 5-aminolevulinate + CO2 + CoA. Its pathway is porphyrin-containing compound metabolism; protoporphyrin-IX biosynthesis; 5-aminolevulinate from glycine: step 1/1. This Rickettsia felis (strain ATCC VR-1525 / URRWXCal2) (Rickettsia azadi) protein is 5-aminolevulinate synthase (hemA).